A 454-amino-acid polypeptide reads, in one-letter code: UPF0210 protein Mlab_1030 (454 aa).

This sequence belongs to the UPF0210 family.

The chain is UPF0210 protein Mlab_1030 from Methanocorpusculum labreanum (strain ATCC 43576 / DSM 4855 / Z).